Reading from the N-terminus, the 314-residue chain is Thioredoxin reductase aclD (314 aa).

FAD-binding positions include 13-16, 35-40, His47, and Ala112; these read GGPA and DSKSYR. An intrachain disulfide couples Cys136 to Cys139. Residues Asp281 and 288 to 289 each bind FAD; that span reads AA.

Belongs to the class-II pyridine nucleotide-disulfide oxidoreductase family. As to quaternary structure, homodimer. The cofactor is FAD.

It functions in the pathway mycotoxin biosynthesis. Its function is as follows. Thioredoxin reductase; part of the gene cluster that mediates the biosynthesis of aspirochlorine (or antibiotic A30641), an unusual halogenated spiro compound with distinctive antifungal properties due to selective inhibition of protein biosynthesis, and which is also active against bacteria, viruses, and murine tumor cells. The non-ribosomal peptide synthetase (NRPS) aclP is responsible the formation of the diketopiperazine (DKP) core from the condensation of 2 phenylalanine residues. One Phe residue is tailored into chlorotyrosine by hydroxylation and chlorination, whereas the second Phe undergoes an unprecedented C-C bond cleavage to be converted into glycine. After formation of the DKP, sulfur is incorporated into the DKP by conjugation with glutathione by aclG, followed by its stepwise degradation to the thiol by aclI, aclJ and aclK, and the dithiol oxidation by aclT. In addition, oxygenases (aclB, aclC, aclL and aclO) and O-methyltransferases (aclM and aclU) act as tailoring enzymes to produce the intermediate dechloroaspirochlorine. Ultimately, chlorination of dechloroaspirochlorine by the halogenase aclH is the last step in the aspirochlorine pathway. The chain is Thioredoxin reductase aclD from Aspergillus oryzae (strain ATCC 42149 / RIB 40) (Yellow koji mold).